The following is a 476-amino-acid chain: ATP synthase subunit beta (476 aa).

154-161 (GGAGVGKT) contacts ATP.

The protein belongs to the ATPase alpha/beta chains family. As to quaternary structure, F-type ATPases have 2 components, CF(1) - the catalytic core - and CF(0) - the membrane proton channel. CF(1) has five subunits: alpha(3), beta(3), gamma(1), delta(1), epsilon(1). CF(0) has four main subunits: a(1), b(1), b'(1) and c(9-12).

It localises to the cell inner membrane. The enzyme catalyses ATP + H2O + 4 H(+)(in) = ADP + phosphate + 5 H(+)(out). Produces ATP from ADP in the presence of a proton gradient across the membrane. The catalytic sites are hosted primarily by the beta subunits. The polypeptide is ATP synthase subunit beta (Rhodopseudomonas palustris (strain BisB5)).